A 296-amino-acid chain; its full sequence is tRNA uridine(34) hydroxylase (296 aa).

The region spanning 132-226 is the Rhodanese domain; sequence AGRPVVMLDT…YFEEVGGAHY (95 aa). Residue C186 is the Cysteine persulfide intermediate of the active site.

It belongs to the TrhO family.

The catalysed reaction is uridine(34) in tRNA + AH2 + O2 = 5-hydroxyuridine(34) in tRNA + A + H2O. Functionally, catalyzes oxygen-dependent 5-hydroxyuridine (ho5U) modification at position 34 in tRNAs. This chain is tRNA uridine(34) hydroxylase, found in Burkholderia thailandensis (strain ATCC 700388 / DSM 13276 / CCUG 48851 / CIP 106301 / E264).